Consider the following 128-residue polypeptide: Translation initiation factor 5A (128 aa).

Residue Lys35 is modified to Hypusine.

It belongs to the eIF-5A family.

Its subcellular location is the cytoplasm. In terms of biological role, functions by promoting the formation of the first peptide bond. The protein is Translation initiation factor 5A (eif5a) of Archaeoglobus fulgidus (strain ATCC 49558 / DSM 4304 / JCM 9628 / NBRC 100126 / VC-16).